Reading from the N-terminus, the 148-residue chain is L-alanine exporter AlaE (148 aa).

Transmembrane regions (helical) follow at residues 18–38, 49–69, 88–108, and 115–135; these read FALV…ISGM, VSIP…DAFI, LLAY…SVGA, and TAVA…GYFL.

The protein belongs to the AlaE exporter family.

The protein resides in the cell inner membrane. In terms of biological role, exports L-alanine. In Yersinia enterocolitica subsp. palearctica serotype O:3 (strain DSM 13030 / CIP 106945 / Y11), this protein is L-alanine exporter AlaE.